A 292-amino-acid chain; its full sequence is GTP cyclohydrolase FolE2 (292 aa).

This sequence belongs to the GTP cyclohydrolase IV family.

The enzyme catalyses GTP + H2O = 7,8-dihydroneopterin 3'-triphosphate + formate + H(+). It functions in the pathway cofactor biosynthesis; 7,8-dihydroneopterin triphosphate biosynthesis; 7,8-dihydroneopterin triphosphate from GTP: step 1/1. Converts GTP to 7,8-dihydroneopterin triphosphate. This Staphylococcus aureus (strain Newman) protein is GTP cyclohydrolase FolE2.